Consider the following 326-residue polypeptide: Glycolipid sulfotransferase MRA_1383 (326 aa).

Residue 40 to 45 coordinates 3'-phosphoadenylyl sulfate; that stretch reads KSGLTW. The active-site Proton acceptor is the His97. A 3'-phosphoadenylyl sulfate-binding site is contributed by 116–124; it reads RDPRDAAVS.

This sequence belongs to the sulfotransferase 1 family.

In terms of biological role, involved in the synthesis of cell wall sulfolipids. In Mycobacterium tuberculosis (strain ATCC 25177 / H37Ra), this protein is Glycolipid sulfotransferase MRA_1383.